A 338-amino-acid polypeptide reads, in one-letter code: Nicotinate-nucleotide--dimethylbenzimidazole phosphoribosyltransferase (338 aa).

The active-site Proton acceptor is the E305.

It belongs to the CobT family. As to quaternary structure, homodimer.

The enzyme catalyses 5,6-dimethylbenzimidazole + nicotinate beta-D-ribonucleotide = alpha-ribazole 5'-phosphate + nicotinate + H(+). Its pathway is nucleoside biosynthesis; alpha-ribazole biosynthesis; alpha-ribazole from 5,6-dimethylbenzimidazole: step 1/2. Functionally, catalyzes the synthesis of alpha-ribazole-5'-phosphate from nicotinate mononucleotide (NAMN) and 5,6-dimethylbenzimidazole (DMB). The sequence is that of Nicotinate-nucleotide--dimethylbenzimidazole phosphoribosyltransferase (cobU) from Sinorhizobium sp.